Reading from the N-terminus, the 244-residue chain is NAD(P)H-quinone oxidoreductase subunit K (244 aa).

[4Fe-4S] cluster is bound by residues C60, C61, C125, and C156. A disordered region spans residues 213–244; sequence KSEKSIESSKLNPVEESSENIYETNSIDEVIK. Residues 231–244 show a composition bias toward polar residues; it reads ENIYETNSIDEVIK.

The protein belongs to the complex I 20 kDa subunit family. As to quaternary structure, NDH-1 can be composed of about 15 different subunits; different subcomplexes with different compositions have been identified which probably have different functions. It depends on [4Fe-4S] cluster as a cofactor.

The protein resides in the cellular thylakoid membrane. It catalyses the reaction a plastoquinone + NADH + (n+1) H(+)(in) = a plastoquinol + NAD(+) + n H(+)(out). The catalysed reaction is a plastoquinone + NADPH + (n+1) H(+)(in) = a plastoquinol + NADP(+) + n H(+)(out). Functionally, NDH-1 shuttles electrons from an unknown electron donor, via FMN and iron-sulfur (Fe-S) centers, to quinones in the respiratory and/or the photosynthetic chain. The immediate electron acceptor for the enzyme in this species is believed to be plastoquinone. Couples the redox reaction to proton translocation, and thus conserves the redox energy in a proton gradient. Cyanobacterial NDH-1 also plays a role in inorganic carbon-concentration. The polypeptide is NAD(P)H-quinone oxidoreductase subunit K (Prochlorococcus marinus subsp. pastoris (strain CCMP1986 / NIES-2087 / MED4)).